The primary structure comprises 279 residues: Urease accessory protein UreD (279 aa).

Belongs to the UreD family. UreD, UreF and UreG form a complex that acts as a GTP-hydrolysis-dependent molecular chaperone, activating the urease apoprotein by helping to assemble the nickel containing metallocenter of UreC. The UreE protein probably delivers the nickel.

The protein localises to the cytoplasm. Its function is as follows. Required for maturation of urease via the functional incorporation of the urease nickel metallocenter. The protein is Urease accessory protein UreD of Nitrosospira multiformis (strain ATCC 25196 / NCIMB 11849 / C 71).